The chain runs to 230 residues: dITP/XTP pyrophosphatase (230 aa).

Residue 7–12 (STNPGK) participates in substrate binding. Positions 41 and 70 each coordinate Mg(2+). Aspartate 70 functions as the Proton acceptor in the catalytic mechanism. Residues serine 71, 181–184 (FGYD), lysine 205, and 210–211 (HR) contribute to the substrate site.

The protein belongs to the HAM1 NTPase family. As to quaternary structure, homodimer. It depends on Mg(2+) as a cofactor.

It catalyses the reaction XTP + H2O = XMP + diphosphate + H(+). The enzyme catalyses dITP + H2O = dIMP + diphosphate + H(+). The catalysed reaction is ITP + H2O = IMP + diphosphate + H(+). Functionally, pyrophosphatase that catalyzes the hydrolysis of nucleoside triphosphates to their monophosphate derivatives, with a high preference for the non-canonical purine nucleotides XTP (xanthosine triphosphate), dITP (deoxyinosine triphosphate) and ITP. Seems to function as a house-cleaning enzyme that removes non-canonical purine nucleotides from the nucleotide pool, thus preventing their incorporation into DNA/RNA and avoiding chromosomal lesions. This chain is dITP/XTP pyrophosphatase, found in Anaeromyxobacter sp. (strain Fw109-5).